The following is a 206-amino-acid chain: Ras-related protein RABH1a (206 aa).

14–21 (GDQGVGKT) is a GTP binding site. Positions 36–44 (YQATIGIDF) match the Effector region motif. GTP is bound by residues 62–66 (DTAGQ), 120–123 (NKTD), and 150–151 (SA). S-geranylgeranyl cysteine attachment occurs at residues cysteine 204 and cysteine 206. At cysteine 206 the chain carries Cysteine methyl ester.

Belongs to the small GTPase superfamily. Rab family.

It is found in the golgi apparatus membrane. In terms of biological role, protein transport. Regulator of membrane traffic from the Golgi apparatus towards the endoplasmic reticulum (ER). In Arabidopsis thaliana (Mouse-ear cress), this protein is Ras-related protein RABH1a (RABH1A).